A 221-amino-acid chain; its full sequence is MSAHMSGLEIMDEDQLIKDVLDKFLNCHEQTYDEEFLNTFTHLSQEDHVSKRGVFGTDSSENIFTSAKVTHKNEADDYHLRNKTIFLRTSSQCLEEQVDNFLDLEDLDMDEEIKPQMSEDLLLLPGEVEQDVSTSIPSCIPFVAQPPTCEVKPKPSVKRMDKQTEEILGDEVQLFSLDEEFDYDNVMLTSKFSPAEIENIKELCKQQKRKDTSPDLEKSCD.

The residue at position 59 (Ser59) is a Phosphoserine.

Interacts with IFT122; the interaction associates IFTAP with IFT-A complex.

Its function is as follows. Seems to play a role in ciliary BBSome localization, maybe through interaction with IFT-A complex. The polypeptide is Intraflagellar transport-associated protein (Homo sapiens (Human)).